Here is a 1025-residue protein sequence, read N- to C-terminus: Retrovirus-related Pol polyprotein from type-1 retrotransposable element R2 (1025 aa).

Polar residues predominate over residues 1-11; sequence NQIKKSNTSTG. The segment at 1–38 is disordered; the sequence is NQIKKSNTSTGARIPKAMTNPADNFAGGQWKPPGRRSA. The segment at 46 to 69 adopts a C2H2-type zinc-finger fold; that stretch reads FVCEHCLRAFTTNTGRGLHIKRAH. The span at 146–158 shows a compositional bias: basic and acidic residues; that stretch reads NRARETELTRLET. Residues 146-172 form a disordered region; the sequence is NRARETELTRLETADEDPASQEQDNPN. The Reverse transcriptase domain maps to 358–635; that stretch reads MIMYHGQCPR…DQWKYLGVVY (278 aa). Residues 755–1025 are nucleic acid-binding endonuclease; sequence SLLGGDWVAE…YRTERRRTAN (271 aa).

The catalysed reaction is DNA(n) + a 2'-deoxyribonucleoside 5'-triphosphate = DNA(n+1) + diphosphate. The sequence is that of Retrovirus-related Pol polyprotein from type-1 retrotransposable element R2 from Nasonia vitripennis (Parasitic wasp).